A 395-amino-acid polypeptide reads, in one-letter code: MASVEEIRKAQRAHGPATVLAIGTATPSNCITQADYPDYYFRITKSDHMTELKEKFKRMCDKSMIKKRYMYLNEEILNENPNMCAYMAPSLDARQTIVVVEVPKLGKEAATKAIKEWGQPKSKITHLVFCTTSGVDMPGADYQLTKLLGLRPSVKRLMMYQQGCFAGGTVLRLAKDLAENNKGARVLVVCSEITAVTFRGPTDTHLDSLVGQALFGDGAAAVIVGADPDTSVERPLFELISAAQTILPDSDGAIDGHLREVGLTFHLLKDVPGIISKNIEKSLAEAFAPLGISDWNSLFWIAHPGGPAILDQVESKLGLKEEKLRATRHVLSEYGNMSSACVLFILDEMRRNSLEGGKVTTGEGLEWGVLFGFGPGLTVETVVLHSVPVPVEASH.

The active site involves C164.

The protein belongs to the thiolase-like superfamily. Chalcone/stilbene synthases family.

The enzyme catalyses (E)-4-coumaroyl-CoA + 3 malonyl-CoA + 3 H(+) = 2',4,4',6'-tetrahydroxychalcone + 3 CO2 + 4 CoA. It functions in the pathway secondary metabolite biosynthesis; flavonoid biosynthesis. Its function is as follows. The primary product of this enzyme is 4,2',4',6'-tetrahydroxychalcone (also termed naringenin-chalcone or chalcone) which can under specific conditions spontaneously isomerize into naringenin. The chain is Chalcone synthase (CHS) from Betula pendula (European white birch).